The primary structure comprises 216 residues: Somatotropin (216 aa).

An N-terminal signal peptide occupies residues 1–26 (MAAGPRTSVLLAFGLLCLPWPQDVGA). H45 contacts Zn(2+). Cysteines 78 and 189 form a disulfide. S131 is modified (phosphoserine). E198 contributes to the Zn(2+) binding site. Residues C206 and C214 are joined by a disulfide bond.

Belongs to the somatotropin/prolactin family.

It localises to the secreted. Plays an important role in growth control. Its major role in stimulating body growth is to stimulate the liver and other tissues to secrete IGF1. It stimulates both the differentiation and proliferation of myoblasts. It also stimulates amino acid uptake and protein synthesis in muscle and other tissues. The sequence is that of Somatotropin (GH1) from Equus caballus (Horse).